The chain runs to 64 residues: Large ribosomal subunit protein bL35 (64 aa).

Basic residues predominate over residues 1-14 (MKNKTHKGTAKRVK). Positions 1–30 (MKNKTHKGTAKRVKVTGSGKLVREQANRRH) are disordered. Residues 21-30 (LVREQANRRH) are compositionally biased toward basic and acidic residues.

Belongs to the bacterial ribosomal protein bL35 family.

This is Large ribosomal subunit protein bL35 from Corynebacterium efficiens (strain DSM 44549 / YS-314 / AJ 12310 / JCM 11189 / NBRC 100395).